The chain runs to 339 residues: Small ribosomal subunit biogenesis GTPase RsgA (339 aa).

The 161-residue stretch at 111 to 271 folds into the CP-type G domain; that stretch reads MRGLLKPVAA…LIDSPGIREF (161 aa). GTP-binding positions include 159–162 and 213–221; these read NKAD and GQSGVGKSS. 4 residues coordinate Zn(2+): C295, C300, H302, and C308.

This sequence belongs to the TRAFAC class YlqF/YawG GTPase family. RsgA subfamily. Monomer. Associates with 30S ribosomal subunit, binds 16S rRNA. It depends on Zn(2+) as a cofactor.

It localises to the cytoplasm. One of several proteins that assist in the late maturation steps of the functional core of the 30S ribosomal subunit. Helps release RbfA from mature subunits. May play a role in the assembly of ribosomal proteins into the subunit. Circularly permuted GTPase that catalyzes slow GTP hydrolysis, GTPase activity is stimulated by the 30S ribosomal subunit. This chain is Small ribosomal subunit biogenesis GTPase RsgA, found in Pseudomonas aeruginosa (strain LESB58).